The sequence spans 246 residues: Acetoacetate decarboxylase (246 aa).

Catalysis depends on Lys-115, which acts as the Schiff-base intermediate with acetoacetate.

It belongs to the ADC family.

The enzyme catalyses acetoacetate + H(+) = acetone + CO2. Functionally, catalyzes the conversion of acetoacetate to acetone and carbon dioxide. This Clostridium beijerinckii (strain ATCC 51743 / NCIMB 8052) (Clostridium acetobutylicum) protein is Acetoacetate decarboxylase.